A 496-amino-acid polypeptide reads, in one-letter code: Bifunctional protein HldE (496 aa).

Positions methionine 1–alanine 331 are ribokinase. Asparagine 206–glutamate 209 contacts ATP. Residue aspartate 276 is part of the active site. The cytidylyltransferase stretch occupies residues phenylalanine 358–leucine 496.

It in the N-terminal section; belongs to the carbohydrate kinase PfkB family. The protein in the C-terminal section; belongs to the cytidylyltransferase family. Homodimer.

The enzyme catalyses D-glycero-beta-D-manno-heptose 7-phosphate + ATP = D-glycero-beta-D-manno-heptose 1,7-bisphosphate + ADP + H(+). It catalyses the reaction D-glycero-beta-D-manno-heptose 1-phosphate + ATP + H(+) = ADP-D-glycero-beta-D-manno-heptose + diphosphate. It functions in the pathway nucleotide-sugar biosynthesis; ADP-L-glycero-beta-D-manno-heptose biosynthesis; ADP-L-glycero-beta-D-manno-heptose from D-glycero-beta-D-manno-heptose 7-phosphate: step 1/4. Its pathway is nucleotide-sugar biosynthesis; ADP-L-glycero-beta-D-manno-heptose biosynthesis; ADP-L-glycero-beta-D-manno-heptose from D-glycero-beta-D-manno-heptose 7-phosphate: step 3/4. In terms of biological role, catalyzes the phosphorylation of D-glycero-D-manno-heptose 7-phosphate at the C-1 position to selectively form D-glycero-beta-D-manno-heptose-1,7-bisphosphate. Catalyzes the ADP transfer from ATP to D-glycero-beta-D-manno-heptose 1-phosphate, yielding ADP-D-glycero-beta-D-manno-heptose. The chain is Bifunctional protein HldE from Rhodospirillum rubrum (strain ATCC 11170 / ATH 1.1.1 / DSM 467 / LMG 4362 / NCIMB 8255 / S1).